We begin with the raw amino-acid sequence, 238 residues long: Orotidine 5'-phosphate decarboxylase (238 aa).

Substrate is bound by residues Asp-10, Lys-32, 59–68, Thr-122, Arg-184, Gln-193, Gly-213, and Arg-214; that span reads DLKLHDIPNT. The active-site Proton donor is Lys-61.

Belongs to the OMP decarboxylase family. Type 1 subfamily. Homodimer.

The enzyme catalyses orotidine 5'-phosphate + H(+) = UMP + CO2. Its pathway is pyrimidine metabolism; UMP biosynthesis via de novo pathway; UMP from orotate: step 2/2. In terms of biological role, catalyzes the decarboxylation of orotidine 5'-monophosphate (OMP) to uridine 5'-monophosphate (UMP). This is Orotidine 5'-phosphate decarboxylase from Bacillus cereus (strain B4264).